We begin with the raw amino-acid sequence, 66 residues long: 14-3-3-like protein 2 (66 aa).

Belongs to the 14-3-3 family.

This Pseudotsuga menziesii (Douglas-fir) protein is 14-3-3-like protein 2.